The primary structure comprises 542 residues: Chaperonin GroEL (542 aa).

Residues 29–32 (TLGP), 86–90 (DGTTT), Gly-414, and Asp-491 contribute to the ATP site.

It belongs to the chaperonin (HSP60) family. As to quaternary structure, forms a cylinder of 14 subunits composed of two heptameric rings stacked back-to-back. Interacts with the co-chaperonin GroES.

It is found in the cytoplasm. The catalysed reaction is ATP + H2O + a folded polypeptide = ADP + phosphate + an unfolded polypeptide.. Its function is as follows. Together with its co-chaperonin GroES, plays an essential role in assisting protein folding. The GroEL-GroES system forms a nano-cage that allows encapsulation of the non-native substrate proteins and provides a physical environment optimized to promote and accelerate protein folding. The polypeptide is Chaperonin GroEL (Desulforamulus reducens (strain ATCC BAA-1160 / DSM 100696 / MI-1) (Desulfotomaculum reducens)).